Consider the following 286-residue polypeptide: Ribose-5-phosphate isomerase (286 aa).

This sequence belongs to the ribose 5-phosphate isomerase family.

It localises to the cytoplasm. It carries out the reaction aldehydo-D-ribose 5-phosphate = D-ribulose 5-phosphate. It functions in the pathway carbohydrate degradation; pentose phosphate pathway; D-ribose 5-phosphate from D-ribulose 5-phosphate (non-oxidative stage): step 1/1. This chain is Ribose-5-phosphate isomerase (RKI1), found in Mycosarcoma maydis (Corn smut fungus).